The primary structure comprises 73 residues: Gas vesicle protein M2 (73 aa).

The protein belongs to the gas vesicle GvpA family. GvpF to GvpM interact with each other in vitro, and may form multi-subunit complex(es). Might interact with GvpA.

It is found in the gas vesicle. Proteins GvpF to GvpM might be involved in nucleating gas vesicle formation. A minor component of the gas vesicle. Gas vesicles are hollow, gas filled proteinaceous nanostructures found in several microbial planktonic microorganisms. They allow positioning of halobacteria at the optimal depth for growth in the poorly aerated, shallow brine pools of their habitat. Functionally, expression of 2 c-vac DNA fragments containing 2 divergently transcribed regions (gvpE-gvpF-gvpG-gvpH-gvpI-gvpJ-gvpK-gvpL-gvpM and gvpA-gvpC-gvpN-gvpO) allows H.volcanii to produce gas vesicles. The protein is Gas vesicle protein M2 of Halobacterium salinarum (strain ATCC 700922 / JCM 11081 / NRC-1) (Halobacterium halobium).